The following is a 472-amino-acid chain: Probable dipeptidase A (472 aa).

C10 is a catalytic residue.

It belongs to the peptidase C69 family.

It carries out the reaction an L-aminoacyl-L-amino acid + H2O = 2 an L-alpha-amino acid. This chain is Probable dipeptidase A (pepDA), found in Streptococcus pyogenes serotype M1.